A 328-amino-acid polypeptide reads, in one-letter code: GMP reductase (328 aa).

C176 (thioimidate intermediate) is an active-site residue. Residue 205–228 coordinates NADP(+); the sequence is IIADGGIRTHGDIAKSVRFGATMV.

This sequence belongs to the IMPDH/GMPR family. GuaC type 2 subfamily.

The enzyme catalyses IMP + NH4(+) + NADP(+) = GMP + NADPH + 2 H(+). Functionally, catalyzes the irreversible NADPH-dependent deamination of GMP to IMP. It functions in the conversion of nucleobase, nucleoside and nucleotide derivatives of G to A nucleotides, and in maintaining the intracellular balance of A and G nucleotides. The sequence is that of GMP reductase from Shouchella clausii (strain KSM-K16) (Alkalihalobacillus clausii).